Reading from the N-terminus, the 310-residue chain is Putative HTH-type transcriptional regulatory protein YN1551_1579 (310 aa).

Positions 125–180 (LKHKREEMGYSIGDVAKFLGVSRKAIYDYEKGDSDVSLEVAEKLIDLFGDDIIGDV) constitute an HTH cro/C1-type domain. The segment at residues 136–155 (IGDVAKFLGVSRKAIYDYEK) is a DNA-binding region (H-T-H motif).

This is Putative HTH-type transcriptional regulatory protein YN1551_1579 from Saccharolobus islandicus (strain Y.N.15.51 / Yellowstone #2) (Sulfolobus islandicus).